A 94-amino-acid chain; its full sequence is ESAT-6-like protein EsxL (94 aa).

It belongs to the WXG100 family. ESAT-6 subfamily. As to quaternary structure, strongly interacts with EsxK to form a heterodimeric complex under reducing conditions. The complex is regulated by the redox state of EsxL.

The protein localises to the secreted. Induces apoptosis of host cells. Is immunogenic with highly specific seroreactivity towards TB patients' serum. The polypeptide is ESAT-6-like protein EsxL (Mycobacterium tuberculosis (strain ATCC 25618 / H37Rv)).